The sequence spans 222 residues: Probable glutathione-independent glyoxalase hsp3104 (222 aa).

Active-site residues include Cys124, His125, and Glu155.

The protein belongs to the peptidase C56 family. HSP31-like subfamily.

The protein resides in the cytoplasm. The catalysed reaction is methylglyoxal + H2O = (R)-lactate + H(+). Functionally, catalyzes the conversion of methylglyoxal (MG) to D-lactate in a single glutathione (GSH)-independent step. May play a role in detoxifying endogenously produced glyoxals. Involved in protection against reactive oxygen species (ROS). This is Probable glutathione-independent glyoxalase hsp3104 from Schizosaccharomyces pombe (strain 972 / ATCC 24843) (Fission yeast).